A 930-amino-acid polypeptide reads, in one-letter code: F-box only protein 11 (930 aa).

The tract at residues 1-150 (MNSVRAANRR…RVSGKSQDLS (150 aa)) is disordered. Over residues 7–16 (ANRRPRRVSR) the composition is skewed to basic residues. Over residues 17 to 27 (PRPVQQQQQQP) the composition is skewed to low complexity. The segment covering 28–73 (PQQPPPQPPQQQPPPQPPQQPPQQQPPPPPQQQPPPPPPPPPPPPQ) has biased composition (pro residues). The segment covering 117 to 132 (PTKSSMEGASTSTTEN) has biased composition (polar residues). The F-box domain occupies 156 to 202 (QYLQEKLPDEVVLKIFSYLLEQDLCRAACVCKRFSELANDPILWKRL). 19 PbH1 repeats span residues 398 to 420 (GACPTIKHCNISDCENVGLYITD), 421 to 443 (HAQGIYEDNEISNNALAGIWVKN), 444 to 466 (HGNPIIRRNHIHHGRDVGVFTFD), 467 to 489 (HGMGYFESCNIHRNRIAGFEVKA), 490 to 512 (YANPTVVRCEIHHGQTGGIYVHE), 513 to 535 (KGRGQFIENKIYANNFAGVWITS), 536 to 558 (NSDPTIRGNSIFNGNQGGVYIFG), 559 to 581 (DGRGLIEGNDIYGNALAGIQIRT), 582 to 604 (NSCPIVRHNKIHDGQHGGIYVHE), 605 to 627 (KGQGVIEENEVYSNTLAGVWVTT), 628 to 650 (GSTPVLRRNRIHSGKQVGVYFYD), 651 to 673 (NGHGVLEDNDIYNHMYSGVQIRT), 674 to 696 (GSNPKIRRNKIWGGQNGGILVYN), 697 to 719 (SGLGCIEDNEIFDNAMAGVWIKT), 720 to 742 (DSNPTLRRNKIHDGRDGGICIFN), 743 to 765 (GGRGLLEENDIFRNAQAGVLIST), 766 to 788 (NSHPVLRKNRIFDGFAAGIEITN), 789 to 811 (HATATLEGNQIFNNRFGGLFLAS), and 812 to 833 (GVNVTMKDNKIMNNQDAIEKAV). The UBR-type zinc finger occupies 836–907 (GQCLYKISSY…LSNPCTLAGE (72 aa)).

As to quaternary structure, component of the SCF(FBXO11) complex consisting of CUL1, RBX1, SKP1 and FBXO11. Interacts with CIITA. As to expression, at 9.5 dpc and 10.5 dpc, expression is restricted to developing heart tissue. By 11.5 dpc and 12.5 dpc, detected in liver and subsequently in muscle by 13.5 dpc. At 14.5 dpc, still detected in heart, liver and muscle and also in the developing secondary palate including the nasal, medial and oral epithelia of the palatal shelves. At 15.5 dpc and 16.5 dpc, expressed in lung, kidney, heart, liver, muscle and adrenal gland. At this time, fusion of the palate shelves has occurred, with expression confined to the nasal and oral epithelia. At 17.5 dpc, expression in the lung is confined to bronchial epithelial cells and is evident in bone marrow, skin, tissue macrophages, osteoblasts, kidney, liver and spleen. At 18.5 dpc, expressed in bone marrow, liver, kidney and muscle but decreases in heart and lung. At this time, first detected in the middle ear epithelium. At the newborn stage, expression is strong in the middle ear where it is confined to mucin-secreting cells, as well as persisting in bone marrow, kidney and liver. Middle ear expression persists in postnatal head tissue at 4 and 13 days after birth and has declined by 21 days after birth. In the adult, expression is seen in alveolar macrophages of the lung, glomeruli and collecting tubules of the kidney, midbrain, heart and muscle.

It localises to the nucleus. It is found in the chromosome. The protein operates within protein modification; protein ubiquitination. Substrate recognition component of a SCF (SKP1-CUL1-F-box protein) E3 ubiquitin-protein ligase complex which mediates the ubiquitination and subsequent proteasomal degradation of target proteins, such as DTL/CDT2, BCL6, SNAI1 and PRDM1/BLIMP1. The SCF(FBXO11) complex mediates ubiquitination and degradation of BCL6, thereby playing a role in the germinal center B-cells terminal differentiation toward memory B-cells and plasma cells. The SCF(FBXO11) complex also mediates ubiquitination and degradation of DTL, an important step for the regulation of TGF-beta signaling, cell migration and the timing of the cell-cycle progression and exit. The SCF(FBXO11) complex also catalyzes ubiquitination and degradation of GSK3B-phosphorylated SNAI1. Binds to and neddylates phosphorylated p53/TP53, inhibiting its transcriptional activity. Plays a role in the regulatiom of erythropoiesis but not myelopoiesis or megakaryopoiesis. Mechanistically, activates erythroid genes by mediating the degradation of BAHD1, a heterochromatin-associated protein that recruits corepressors to H3K27me3 marks. Participates in macrophage cell death and inflammation in response to bacterial toxins by regulating the expression of complement 5a receptor 1/C5AR1 and IL-1beta. Acts as a critical regulator to determine the level of MHC-II by mediating the recognition of degron at the P/S/T domain of CIITA leading to its ubiquitination and subsequent degradation via the proteasome. Participates in the antiviral repsonse by initiating the activation of TBK1-IRF3-IFN-I axis. Mediates the 'Lys-63'-linked ubiquitination of TRAF3 to strengthen the interaction between TRAF3 and TBK1. This chain is F-box only protein 11, found in Mus musculus (Mouse).